The following is a 145-amino-acid chain: Large ribosomal subunit protein uL13 (145 aa).

The protein belongs to the universal ribosomal protein uL13 family. Part of the 50S ribosomal subunit.

This protein is one of the early assembly proteins of the 50S ribosomal subunit, although it is not seen to bind rRNA by itself. It is important during the early stages of 50S assembly. The polypeptide is Large ribosomal subunit protein uL13 (Bacillus velezensis (strain DSM 23117 / BGSC 10A6 / LMG 26770 / FZB42) (Bacillus amyloliquefaciens subsp. plantarum)).